Consider the following 482-residue polypeptide: Docking protein 1 (482 aa).

Met1 carries the post-translational modification N-acetylmethionine. Positions Ala4–Phe119 constitute a PH domain. Position 48 is a phosphoserine (Ser48). The IRS-type PTB domain occupies Glu151 to Gly259. Residues Ser269 and Ser290 each carry the phosphoserine modification. The disordered stretch occupies residues Ser269–Gly328. Phosphotyrosine is present on residues Tyr295, Tyr336, Tyr340, Tyr361, and Tyr376. The disordered stretch occupies residues Thr353–Arg373. Tyr397 carries the post-translational modification Phosphotyrosine; by INSR. Residues Glu398–Thr482 form a disordered region. Phosphotyrosine is present on Tyr408. A compositionally biased stretch (pro residues) spans Val410–Lys423. Ser415 bears the Phosphoserine mark. A compositionally biased stretch (polar residues) spans Ser432–Ser459. The residue at position 450 (Tyr450) is a Phosphotyrosine.

It belongs to the DOK family. Type A subfamily. Interacts with RasGAP, INPP5D/SHIP1 and ABL1. Interacts directly with phosphorylated ITGB3. Interacts with SRMS (via the SH2 and SH3 domains). Post-translationally, constitutively tyrosine-phosphorylated. Phosphorylated by TEC. Phosphorylated on tyrosine residues by the insulin receptor kinase. Results in the negative regulation of the insulin signaling pathway. Phosphorylated by LYN. Phosphorylated on tyrosine residues by SRMS. In terms of tissue distribution, expressed in lung, spleen, skeletal muscle and kidney.

It is found in the cytoplasm. The protein resides in the nucleus. In terms of biological role, DOK proteins are enzymatically inert adaptor or scaffolding proteins. They provide a docking platform for the assembly of multimolecular signaling complexes. DOK1 appears to be a negative regulator of the insulin signaling pathway. Modulates integrin activation by competing with talin for the same binding site on ITGB3. The sequence is that of Docking protein 1 (Dok1) from Mus musculus (Mouse).